A 268-amino-acid polypeptide reads, in one-letter code: Mediator of RNA polymerase II transcription subunit 8-A (268 aa).

Coiled coils occupy residues 1–26 and 117–160; these read MQREEKQLEACLDALISQVSDIKNSL and VEEL…EERE. Residues 190-268 form a disordered region; it reads GLSNRRPPGQ…KSASMHPYQR (79 aa). The segment covering 223 to 246 has biased composition (polar residues); it reads VPMSLQSNQQQQHMAGVSMSQGNQ.

The protein belongs to the Mediator complex subunit 8 family. Component of the Mediator complex. May be part of a multisubunit E3 ubiquitin-protein ligase complex.

The protein resides in the nucleus. It participates in protein modification; protein ubiquitination. Component of the Mediator complex, a coactivator involved in the regulated transcription of nearly all RNA polymerase II-dependent genes. Mediator functions as a bridge to convey information from gene-specific regulatory proteins to the basal RNA polymerase II transcription machinery. Mediator is recruited to promoters by direct interactions with regulatory proteins and serves as a scaffold for the assembly of a functional preinitiation complex with RNA polymerase II and the general transcription factors. May play a role as a target recruitment subunit in E3 ubiquitin-protein ligase complexes and thus in ubiquitination and subsequent proteasomal degradation of target proteins. This Xenopus laevis (African clawed frog) protein is Mediator of RNA polymerase II transcription subunit 8-A (med8-a).